The sequence spans 115 residues: U3-lycotoxin-Ls1g (115 aa).

An N-terminal signal peptide occupies residues 1 to 20 (MKFVLLFGVFLVTLFSYSSA). Residues 21–44 (EMLDDFDQADEDELLSLIEKEEAR) constitute a propeptide that is removed on maturation. 4 disulfides stabilise this stretch: C48–C63, C55–C72, C62–C87, and C74–C85.

Belongs to the neurotoxin 19 (CSTX) family. 01 subfamily. Expressed by the venom gland.

It is found in the secreted. The protein is U3-lycotoxin-Ls1g of Lycosa singoriensis (Wolf spider).